A 351-amino-acid polypeptide reads, in one-letter code: THO complex subunit 3 (351 aa).

The interval 1–20 (MAVPAAAMGPSALGQSGPGS) is disordered. A2 bears the N-acetylalanine mark. WD repeat units lie at residues 53-94 (AHSA…KENN), 97-137 (GHGD…CIAT), 139-178 (NTKGENINICWSPDGQTIAVGNKDDVVTFIDAKTHRSKAE), 180-221 (QFKF…QSIN), 222-261 (AHPSNCICIKFDPMGKYFATGSADALVSLWDVDELVCVRC), and 264-303 (RLDWPVRTLSFSHDGKMLASASEDHFIDIAEVETGDKLWE).

This sequence belongs to the THOC3 family. Component of the THO subcomplex, which is composed of THOC1, THOC2, THOC3, THOC5, THOC6 and THOC7. The THO subcomplex interacts with DDX39B to form the THO-DDX39B complex which multimerizes into a 28-subunit tetrameric assembly. Component of the transcription/export (TREX) complex at least composed of ALYREF/THOC4, DDX39B, SARNP/CIP29, CHTOP and the THO subcomplex; in the complex interacts with THOC2. TREX seems to have a dynamic structure involving ATP-dependent remodeling.

Its subcellular location is the nucleus. The protein resides in the nucleus speckle. Component of the THO subcomplex of the TREX complex which is thought to couple mRNA transcription, processing and nuclear export, and which specifically associates with spliced mRNA and not with unspliced pre-mRNA. Required for efficient export of polyadenylated RNA and spliced mRNA. The THOC1-THOC2-THOC3 core complex alone is sufficient to bind export factor NXF1-NXT1 and promote ATPase activity of DDX39B. TREX is recruited to spliced mRNAs by a transcription-independent mechanism, binds to mRNA upstream of the exon-junction complex (EJC) and is recruited in a splicing- and cap-dependent manner to a region near the 5' end of the mRNA where it functions in mRNA export to the cytoplasm via the TAP/NXF1 pathway. Its function is as follows. (Microbial infection) The TREX complex is essential for the export of Kaposi's sarcoma-associated herpesvirus (KSHV) intronless mRNAs and infectious virus production. The chain is THO complex subunit 3 (THOC3) from Homo sapiens (Human).